The following is a 292-amino-acid chain: Homoserine kinase (292 aa).

Position 84-94 (84-94 (PLARGMGSSSA)) interacts with ATP.

It belongs to the GHMP kinase family. Homoserine kinase subfamily.

Its subcellular location is the cytoplasm. It catalyses the reaction L-homoserine + ATP = O-phospho-L-homoserine + ADP + H(+). It functions in the pathway amino-acid biosynthesis; L-threonine biosynthesis; L-threonine from L-aspartate: step 4/5. Functionally, catalyzes the ATP-dependent phosphorylation of L-homoserine to L-homoserine phosphate. This is Homoserine kinase from Campylobacter lari (strain RM2100 / D67 / ATCC BAA-1060).